Here is a 627-residue protein sequence, read N- to C-terminus: MKKKLVSRLSYAAGAFGNDVFYATLSTYFIVFVTTHLFNAGDHKMIFIITNLITAIRIGEVLLDPLIGNAIDRTESRWGKFKPWVVGGGIISSLALLALFTDFGGINQSKPVVYLVIFGIVYLIMDIFYSFKDTGFWAMIPALSLDSREREKTSTFARVGSTIGANLVGVVITPIILFFSASKANPNGDKQGWFFFALIVAIVGILTSITVGLGTHEVKSALRESNEKTTLKQVFKVLGQNDQLLWLAFAYWFYGLGINTLNALQLYYFSYILGDARGYSLLYTINTFVGLISASFFPSLAKKFNRNRLFYACIAVMLLGIGVFSVASGSLALSLVGAEFFFIPQPLAFLVVLMIISDAVEYGQLKTGHRDEALTLSVRPLVDKLGGALSNWFVSLIALTAGMTTGATASTITAHGQMVFKLAMFALPAVMLLIAVSIFAKKVFLTEEKHAEIVDQLETQFGQSHAQKPAQAESFTLASPVSGQLMNLDMVDDPVFADKKLGDGFALVPADGKVYAPFAGTVRQLAKTRHSIVLENEHGVLVLIHLGLGTAKLNGTGFVSYVEEGSQVEAGQQILEFWDPAIKQAKLDDTVIVTVINSETFANSQMLLPIGHSVQALDDVFKLEGKN.

A permease region spans residues Met-1 to Gln-460. Helical transmembrane passes span Ala-13–Val-33, Ile-46–Leu-66, Trp-84–Gly-104, Pro-111–Phe-131, Val-159–Phe-179, Trp-193–Leu-213, Leu-244–Leu-264, Leu-281–Ala-301, Leu-309–Gly-329, Val-336–Ile-356, Trp-392–Ile-412, and Val-419–Phe-439. One can recognise a PTS EIIA type-1 domain in the interval Asp-493–Asn-597. His-545 is modified (phosphohistidine; by HPr).

It in the N-terminal section; belongs to the sodium:galactoside symporter (TC 2.A.2) family.

The protein resides in the cell membrane. In terms of biological role, responsible for transport of beta-galactosides into the cell, with the concomitant uptake of protons (symport system), and also for transport of homologous and heterologous exchange of beta-galactosides. This chain is Lactose permease (lacY), found in Lactobacillus delbrueckii subsp. bulgaricus (strain ATCC 11842 / DSM 20081 / BCRC 10696 / JCM 1002 / NBRC 13953 / NCIMB 11778 / NCTC 12712 / WDCM 00102 / Lb 14).